The following is a 335-amino-acid chain: Nucleoid-associated protein YejK (335 aa).

Belongs to the YejK family.

It is found in the cytoplasm. The protein resides in the nucleoid. The chain is Nucleoid-associated protein YejK from Salmonella arizonae (strain ATCC BAA-731 / CDC346-86 / RSK2980).